The chain runs to 130 residues: Glycoprotein hormone alpha-2 (130 aa).

The signal sequence occupies residues 1–22 (MPMAPRVLLFCLLGLAVTEGHG). 4 cysteine pairs are disulfide-bonded: Cys-32–Cys-90, Cys-49–Cys-104, Cys-58–Cys-120, and Cys-62–Cys-122. N-linked (GlcNAc...) asparagine glycosylation is found at Asn-38 and Asn-82.

The protein belongs to the glycoprotein hormones subunit alpha family. In terms of assembly, heterodimer with GPHB5; this heterodimer interacts with thyroid-stimulating hormone receptor (TSHR), and hence stimulates cAMP production.

The protein localises to the secreted. Its function is as follows. Functions as a heterodimeric glycoprotein hormone with GPHB5 able to bind and activate the thyroid-stimulating hormone receptor (TSHR), leading to increased cAMP production. Plays a central role in controlling thyroid cell metabolism. The sequence is that of Glycoprotein hormone alpha-2 (Gpha2) from Rattus norvegicus (Rat).